Reading from the N-terminus, the 422-residue chain is Glutamyl-tRNA reductase (422 aa).

Substrate contacts are provided by residues 48–51 (TCNR), S100, 105–107 (EDQ), and Q111. The active-site Nucleophile is the C49. Residue 180–185 (GTGEMG) participates in NADP(+) binding.

It belongs to the glutamyl-tRNA reductase family. Homodimer.

It catalyses the reaction (S)-4-amino-5-oxopentanoate + tRNA(Glu) + NADP(+) = L-glutamyl-tRNA(Glu) + NADPH + H(+). Its pathway is porphyrin-containing compound metabolism; protoporphyrin-IX biosynthesis; 5-aminolevulinate from L-glutamyl-tRNA(Glu): step 1/2. Catalyzes the NADPH-dependent reduction of glutamyl-tRNA(Glu) to glutamate 1-semialdehyde (GSA). The polypeptide is Glutamyl-tRNA reductase (Methanococcoides burtonii (strain DSM 6242 / NBRC 107633 / OCM 468 / ACE-M)).